A 637-amino-acid polypeptide reads, in one-letter code: Sphingomyelin phosphodiesterase B (637 aa).

The first 20 residues, 1–20, serve as a signal peptide directing secretion; sequence MKVKAPILLLFVFLINFCFS. Asparagine 73 is a glycosylation site (N-linked (GlcNAc...) asparagine). Residues 73-155 form the Saposin B-type domain; the sequence is NGTKCDICKF…GFVGFCPYVP (83 aa). 3 disulfides stabilise this stretch: cysteine 77/cysteine 151, cysteine 80/cysteine 145, and cysteine 108/cysteine 119. N-linked (GlcNAc...) asparagine glycans are attached at residues asparagine 128 and asparagine 157. Zn(2+)-binding residues include aspartate 191 and histidine 193. A disulfide bond links cysteine 212 and cysteine 233. Aspartate 263 is a Zn(2+) binding site. N-linked (GlcNAc...) asparagine glycosylation occurs at asparagine 279. Asparagine 304 contacts Zn(2+). Asparagine 377 carries N-linked (GlcNAc...) asparagine glycosylation. Residues histidine 407, histidine 441, and histidine 443 each contribute to the Zn(2+) site. Asparagine 523 and asparagine 546 each carry an N-linked (GlcNAc...) asparagine glycan. A disulfide bridge connects residues cysteine 582 and cysteine 595. Asparagine 606 carries N-linked (GlcNAc...) asparagine glycosylation.

It belongs to the acid sphingomyelinase family. The cofactor is Zn(2+).

It localises to the secreted. Functionally, converts sphingomyelin to ceramide. This is Sphingomyelin phosphodiesterase B (sgmB) from Dictyostelium discoideum (Social amoeba).